The primary structure comprises 461 residues: Zinc finger protein ZFP2 (461 aa).

13 C2H2-type zinc fingers span residues 102-124 (YECN…QRIH), 130-152 (YKCN…QRIH), 158-180 (YKCN…QRTH), 186-208 (YQCK…ERIH), 214-236 (YKCN…QRTH), 242-264 (YECN…QRSH), 270-292 (YECS…QRNH), 298-320 (YKCN…QRLH), 326-348 (FECN…RRIH), 354-376 (YECM…QVIH), 382-404 (YECN…QRIH), 410-432 (YECD…QRTH), and 438-460 (YQCN…QRTH).

It belongs to the krueppel C2H2-type zinc-finger protein family.

It localises to the nucleus. Probable transcription factor involved in neuronal differentiation and/or phenotypic maintenance. The chain is Zinc finger protein ZFP2 (ZFP2) from Homo sapiens (Human).